Consider the following 296-residue polypeptide: Stanniocalcin-2 (296 aa).

Residues 1 to 24 (MCAERLGQFVTLALVFATLDPAQG) form the signal peptide. The disordered stretch occupies residues 21-44 (PAQGTDSTNPPEGPQDRSSQQKGR). A compositionally biased stretch (polar residues) spans 24 to 44 (GTDSTNPPEGPQDRSSQQKGR). Asn-73 carries N-linked (GlcNAc...) asparagine glycosylation. The interval 218-296 (PPTAAPEHQP…EQSEYSDIRR (79 aa)) is disordered. Residues 240 to 258 (RDTDHHLTANRGAKGERGS) show a composition bias toward basic and acidic residues. Residues 272 to 282 (GQSAQGPSGSS) are compositionally biased toward low complexity.

This sequence belongs to the stanniocalcin family. In terms of assembly, homodimer; disulfide-linked. In terms of tissue distribution, found in a variety of tissues including skeletal muscle, small intestine, kidney, liver and brain.

The protein localises to the secreted. In terms of biological role, has an anti-hypocalcemic action on calcium and phosphate homeostasis. The polypeptide is Stanniocalcin-2 (Stc2) (Mus musculus (Mouse)).